The sequence spans 242 residues: Myogenic factor 6 (242 aa).

The segment at Gly30–Leu63 is disordered. Residues Asp93–Leu144 enclose the bHLH domain. Positions Ala190–Ser210 are disordered.

As to quaternary structure, efficient DNA binding requires dimerization with another bHLH protein. In terms of tissue distribution, skeletal muscle.

The protein localises to the nucleus. Functionally, involved in muscle differentiation (myogenic factor). Induces fibroblasts to differentiate into myoblasts. Probable sequence specific DNA-binding protein. The sequence is that of Myogenic factor 6 (MYF6) from Gallus gallus (Chicken).